A 41-amino-acid chain; its full sequence is Disintegrin viperistatin (41 aa).

4 disulfides stabilise this stretch: cysteine 1/cysteine 10, cysteine 6/cysteine 29, cysteine 7/cysteine 34, and cysteine 19/cysteine 36. One can recognise a Disintegrin domain in the interval 1–41; that stretch reads CTTGPCCRQCKLKPAGTTCWKTSRTSHYCTGKSCDCPVYQG. The short motif at 21–23 is the Cell attachment site; atypical (KTS) element; sequence KTS.

As to quaternary structure, monomer. In terms of tissue distribution, expressed by the venom gland.

The protein localises to the secreted. Functionally, potent and highly selective inhibitor of alpha-1/beta-1 (ITGA1/ITGB1) integrin binding to collagen I and IV. Is about 25-fold more potent than obtustatin inhibiting the binding of this integrin to collagen IV. The chain is Disintegrin viperistatin from Daboia palaestinae (Palestine viper).